Consider the following 400-residue polypeptide: MAFLADALSRVKPSATIAVSQKARELKAKGRDVIGLGAGEPDFDTPDNIKKAAIDAINRGETKYTPVSGIPELRKAIAAKFKRENGLDYSWEQTIVGTGGKQILFNAFMATLNPGDEVSIPAPYWVSYPEMVALCGGTRFFVSATQEHNFKLQAADLEKAITPKTKWFIFNSPSNPTGAAYTHDELKALTDVLMKNPQVWVLTDDMYEHLTYGDFKFVTPVEVEPQLYDRTLTMNGVSKAYAMTGWRIGYAAGPIQLIKAMDMIQGQQTSGATSIAQWAAVEALNGTQDFIPENKKIFEGRRDLVVSMLNQAKGIVCPVPEGAFYVYPSCKGLIGKTAPSGKVIETDEDFVSELLESEGVAVVHGSAFGLGPNFRISYATSEEQLEEACRRIQRFCGACK.

Positions 39, 125, and 175 each coordinate L-aspartate. An N6-(pyridoxal phosphate)lysine modification is found at lysine 239. Residue arginine 375 coordinates L-aspartate.

The protein belongs to the class-I pyridoxal-phosphate-dependent aminotransferase family. As to quaternary structure, homodimer. The cofactor is pyridoxal 5'-phosphate.

The protein localises to the cytoplasm. The enzyme catalyses L-aspartate + 2-oxoglutarate = oxaloacetate + L-glutamate. It carries out the reaction L-arogenate + 2-oxoglutarate = prephenate + L-glutamate. Its function is as follows. Catalyzes the reversible conversion of aspartate and 2-oxoglutarate to glutamate and oxaloacetate. Can also transaminate prephenate in the presence of glutamate. This chain is Probable aspartate/prephenate aminotransferase (aspC), found in Rhizobium leguminosarum bv. phaseoli.